A 391-amino-acid polypeptide reads, in one-letter code: Homocysteine-responsive endoplasmic reticulum-resident ubiquitin-like domain member 1 protein (391 aa).

M1 carries the N-acetylmethionine modification. At 1 to 263 (MESETEPEPV…VEEDDEINRD (263 aa)) the chain is on the cytoplasmic side. The 63-residue stretch at 10–72 (VTLLVKSPNQ…LLDHQCLRDL (63 aa)) folds into the Ubiquitin-like domain. A disordered region spans residues 100 to 126 (KVAESTEEPAGSNRGQYPEDSSSDGLR). Polar residues predominate over residues 112-124 (NRGQYPEDSSSDG). The interval 115-200 (QYPEDSSSDG…ASGAFVPPPS (86 aa)) is interaction with UBQLN1. A Phosphoserine modification is found at S135. Residues 264 to 284 (WLDWTYSAATFSVFLSILYFY) traverse the membrane as a helical segment. At 285-289 (SSLSR) the chain is on the lumenal side. The helical transmembrane segment at 290–310 (FLMVMGATVVMYLHHVGWFPF) threads the bilayer. Over 311 to 391 (RPRPVQNFPN…LPEGPPAIAN (81 aa)) the chain is Cytoplasmic. The segment at 318 to 359 (FPNDGPPPDIVNQDPNNNLQEGTDPETEDPNHVPPDRGVLDG) is disordered. A compositionally biased stretch (basic and acidic residues) spans 346 to 357 (DPNHVPPDRGVL).

Interacts with PSEN1 and PSEN2. Interacts with UBXN6. Interacts with UBQLN1, UBQLN2 and UBQLN4. Component of the HRD1 complex, which comprises at least SYNV1/HRD1, FAM8A1, HERPUD1/HERP, OS9, SEL1L and UBE2J1. FAM8A1 binding to SYNV1 may promote recruitment of HERPUD1 to the HRD1 complex.

Its subcellular location is the endoplasmic reticulum membrane. Functionally, component of the endoplasmic reticulum quality control (ERQC) system also called ER-associated degradation (ERAD) involved in ubiquitin-dependent degradation of misfolded endoplasmic reticulum proteins. Binds to ubiquilins and this interaction is required for efficient degradation of CD3D via the ERAD pathway. This is Homocysteine-responsive endoplasmic reticulum-resident ubiquitin-like domain member 1 protein (HERPUD1) from Pongo abelii (Sumatran orangutan).